The primary structure comprises 310 residues: Dopamine receptor-interacting protein 1 (310 aa).

As to quaternary structure, interacts with DRD1.

Could be a regulator of the dopamine receptor signaling pathway. This Homo sapiens (Human) protein is Dopamine receptor-interacting protein 1.